Here is a 501-residue protein sequence, read N- to C-terminus: Aluminum-activated malate transporter 2 (501 aa).

6 helical membrane-spanning segments follow: residues 22-42 (VVHA…YYYQ), 52-72 (AMWA…ATLG), 78-98 (AVAT…ASLS), 101-121 (TVEP…STFV), 130-150 (RYDY…VSGF), and 166-186 (VIMG…VWAG). Residues 398 to 425 (FKNKKKPSKSNSGSIGQAMPNKSHDDDD) form a disordered region.

This sequence belongs to the aromatic acid exporter (TC 2.A.85) family.

The protein resides in the membrane. Malate transporter. This Arabidopsis thaliana (Mouse-ear cress) protein is Aluminum-activated malate transporter 2 (ALMT2).